The sequence spans 120 residues: NAD(P)H-quinone oxidoreductase subunit 3 (120 aa).

The next 3 helical transmembrane spans lie at 6–26 (GYDA…LALV), 64–84 (MFAL…PWAV), and 89–109 (LGLL…VALA).

This sequence belongs to the complex I subunit 3 family. As to quaternary structure, NDH-1 can be composed of about 15 different subunits; different subcomplexes with different compositions have been identified which probably have different functions.

The protein resides in the cellular thylakoid membrane. It carries out the reaction a plastoquinone + NADH + (n+1) H(+)(in) = a plastoquinol + NAD(+) + n H(+)(out). It catalyses the reaction a plastoquinone + NADPH + (n+1) H(+)(in) = a plastoquinol + NADP(+) + n H(+)(out). In terms of biological role, NDH-1 shuttles electrons from an unknown electron donor, via FMN and iron-sulfur (Fe-S) centers, to quinones in the respiratory and/or the photosynthetic chain. The immediate electron acceptor for the enzyme in this species is believed to be plastoquinone. Couples the redox reaction to proton translocation, and thus conserves the redox energy in a proton gradient. Cyanobacterial NDH-1 also plays a role in inorganic carbon-concentration. In Prochlorococcus marinus (strain SARG / CCMP1375 / SS120), this protein is NAD(P)H-quinone oxidoreductase subunit 3.